The primary structure comprises 122 residues: Small ribosomal subunit protein uS13 (122 aa).

Residues 95 to 122 (GLPVRGQRTHTNARTRKGPAKSIAGKKK) form a disordered region.

The protein belongs to the universal ribosomal protein uS13 family. Part of the 30S ribosomal subunit. Forms a loose heterodimer with protein S19. Forms two bridges to the 50S subunit in the 70S ribosome.

Located at the top of the head of the 30S subunit, it contacts several helices of the 16S rRNA. In the 70S ribosome it contacts the 23S rRNA (bridge B1a) and protein L5 of the 50S subunit (bridge B1b), connecting the 2 subunits; these bridges are implicated in subunit movement. Contacts the tRNAs in the A and P-sites. The chain is Small ribosomal subunit protein uS13 from Nitrobacter winogradskyi (strain ATCC 25391 / DSM 10237 / CIP 104748 / NCIMB 11846 / Nb-255).